Consider the following 647-residue polypeptide: Leucine-rich repeat transmembrane protein FLRT3 (647 aa).

The first 28 residues, M1–A28, serve as a signal peptide directing secretion. Residues K29–P526 are Extracellular-facing. One can recognise an LRRNT domain in the interval P30 to N62. Cystine bridges form between C31/C37 and C35/C44. LRR repeat units lie at residues E58–L82, R83–Y105, K107–Q126, I127–D152, I154–E179, R181–D197, L198–N223, V225–G246, T247–Y269, and L270–D293. The N-linked (GlcNAc...) asparagine glycan is linked to N226. The 52-residue stretch at N305 to K356 folds into the LRRCT domain. C309 and C334 are joined by a disulfide. The region spanning P404–L502 is the Fibronectin type-III domain. Residues L527 to C547 traverse the membrane as a helical segment. The Cytoplasmic segment spans residues W548–S647. Positions L620–S647 are disordered.

In terms of processing, N-glycosylated. Proteolytic cleavage in the juxtamembrane region gives rise to a soluble ectodomain. Cleavage is probably effected by a metalloprotease.

It localises to the cell membrane. Its subcellular location is the endoplasmic reticulum membrane. The protein localises to the cell junction. The protein resides in the focal adhesion. It is found in the secreted. It localises to the cell projection. Its subcellular location is the axon. The protein localises to the growth cone membrane. Functionally, modulates the structure and function of the apical ectodermal ridge (AER) that controls embryonic limb development. Functions in cell-cell adhesion, cell migration and axon guidance, exerting an attractive or repulsive role depending on its interaction partners. Plays a role in the spatial organization of brain neurons. Plays a role in vascular development. Plays a role in cell-cell adhesion via its interaction with latrophilins that are expressed at the surface of adjacent cells. Mediates axon attraction towards cells expressing NTN1. Mediates axon growth cone collapse and plays a repulsive role in neuron guidance via its interaction with UNC-5 family members. Plays a role in the regulation of the density of glutamaergic synapses. Plays a role in fibroblast growth factor-mediated signaling cascades. Required for normal morphogenesis during embryonic development, but not for normal embryonic patterning. In Gallus gallus (Chicken), this protein is Leucine-rich repeat transmembrane protein FLRT3 (FLRT3).